Reading from the N-terminus, the 72-residue chain is Large ribosomal subunit protein uL29 (72 aa).

Belongs to the universal ribosomal protein uL29 family.

The sequence is that of Large ribosomal subunit protein uL29 from Prochlorococcus marinus (strain MIT 9515).